Consider the following 265-residue polypeptide: Short-chain dehydrogenase/reductase fsr5 (265 aa).

The N-terminal stretch at 1-32 is a signal peptide; the sequence is MASLGKYVSKLAGSRVLVIGGSSGIGFGVAEA. NADP(+) is bound by residues S22, S23, I25, S45, and K50. A glycan (N-linked (GlcNAc...) asparagine) is linked at N62. Positions 88, 130, and 204 each coordinate NADP(+). N218 and N250 each carry an N-linked (GlcNAc...) asparagine glycan.

The protein belongs to the short-chain dehydrogenases/reductases (SDR) family.

Its function is as follows. Short-chain dehydrogenase/reductase; part of the gene cluster that mediates the biosynthesis of fusarubins, highly pigmented naphthoquinones responsible for the coloration of the fruiting bodies. The non-reducing polyketide synthase FSR1 is responsible for the condensation of seven acetyl-CoA units to yield a haptaketide. After rings A and B are formed by aldol-type cyclization, the PKS-derived product is released as 6-O-demethylfusarubinaldehyde. Then, two hydroxyl groups at C-5 and C-10 are incorporated by FSR3, and simultaneously hydroxyl groups at C-6 and C-8 are methylated by FSR2. The aldehyde is, on the one hand, reduced by FSR3 to 8-O-methylfusarubin alcohol, which equilibrates mainly with 8-O-methylfusarubin and only small amounts of 8-O-methylnectriafurone. On the other hand, the aldehyde can be oxidized to form 8-O-methylfusarubinic acid, a reaction driven by FSR3 equilibrating with 8-O-methylfusarubinlactone, finally resulting in 8-O-methylanhydrofusarubinlactol after a further reduction step and loss of water. 8-O-Methylfusarubinic acid can also undergo decarboxylation, resulting in 8-O-methyl-13-hydroxynorjavanicin after another hydroxylation step at C-13. Both steps are most likely also accomplished by FSR3. No enzymatic function has been determined so far for either FSR4 and FSR5. Their deletion does not alter the product spectrum, but the possibility that they catalyze specific enzymatic steps during perithecium development cannot be ruled out. FSR4 might possess a regulatory function in the biosynthesis of fusarubins. In Gibberella fujikuroi (strain CBS 195.34 / IMI 58289 / NRRL A-6831) (Bakanae and foot rot disease fungus), this protein is Short-chain dehydrogenase/reductase fsr5.